The chain runs to 73 residues: Small ribosomal subunit protein bS18 (73 aa).

It belongs to the bacterial ribosomal protein bS18 family. In terms of assembly, part of the 30S ribosomal subunit. Forms a tight heterodimer with protein bS6.

In terms of biological role, binds as a heterodimer with protein bS6 to the central domain of the 16S rRNA, where it helps stabilize the platform of the 30S subunit. In Synechococcus sp. (strain RCC307), this protein is Small ribosomal subunit protein bS18.